We begin with the raw amino-acid sequence, 347 residues long: Putative histone PARylation factor 1-like (347 aa).

M1 is subject to N-acetylmethionine. N6-acetyllysine occurs at positions 187 and 234.

It belongs to the HPF1 family.

This is Putative histone PARylation factor 1-like from Homo sapiens (Human).